The sequence spans 101 residues: Apolipoprotein C-II (101 aa).

Residues 1–22 (MGTRYLLVLLLVLLVLGFEVQG) form the signal peptide. The segment at 66 to 74 (TMDEKIRDI) is lipid binding. The segment at 78–101 (STAAVSTYAGIFTDQLLSMLKGDS) is lipoprotein lipase cofactor.

This sequence belongs to the apolipoprotein C2 family. Post-translationally, proapolipoprotein C-II is synthesized as a sialic acid containing glycoprotein which is subsequently desialylated prior to its proteolytic processing. Proapolipoprotein C-II, the major form found in plasma undergoes proteolytic cleavage of its N-terminal hexapeptide to generate apolipoprotein C-II, which occurs as the minor form in plasma. In terms of tissue distribution, highly expressed in the liver. Moderately expressed in the ileum, jejunum and ovary.

It is found in the secreted. Functionally, component of chylomicrons, very low-density lipoproteins (VLDL), low-density lipoproteins (LDL), and high-density lipoproteins (HDL) in plasma. Plays an important role in lipoprotein metabolism as an activator of lipoprotein lipase. Both proapolipoprotein C-II and apolipoprotein C-II can activate lipoprotein lipase. The protein is Apolipoprotein C-II (APOC2) of Canis lupus familiaris (Dog).